The following is a 561-amino-acid chain: Dihydroxy-acid dehydratase (561 aa).

C50 contributes to the [2Fe-2S] cluster binding site. D82 contacts Mg(2+). Residue C123 participates in [2Fe-2S] cluster binding. Mg(2+) is bound by residues D124 and K125. The residue at position 125 (K125) is an N6-carboxylysine. C195 contributes to the [2Fe-2S] cluster binding site. E447 is a binding site for Mg(2+). S473 acts as the Proton acceptor in catalysis.

The protein belongs to the IlvD/Edd family. In terms of assembly, homodimer. [2Fe-2S] cluster serves as cofactor. Requires Mg(2+) as cofactor.

The catalysed reaction is (2R)-2,3-dihydroxy-3-methylbutanoate = 3-methyl-2-oxobutanoate + H2O. The enzyme catalyses (2R,3R)-2,3-dihydroxy-3-methylpentanoate = (S)-3-methyl-2-oxopentanoate + H2O. It participates in amino-acid biosynthesis; L-isoleucine biosynthesis; L-isoleucine from 2-oxobutanoate: step 3/4. The protein operates within amino-acid biosynthesis; L-valine biosynthesis; L-valine from pyruvate: step 3/4. Functionally, functions in the biosynthesis of branched-chain amino acids. Catalyzes the dehydration of (2R,3R)-2,3-dihydroxy-3-methylpentanoate (2,3-dihydroxy-3-methylvalerate) into 2-oxo-3-methylpentanoate (2-oxo-3-methylvalerate) and of (2R)-2,3-dihydroxy-3-methylbutanoate (2,3-dihydroxyisovalerate) into 2-oxo-3-methylbutanoate (2-oxoisovalerate), the penultimate precursor to L-isoleucine and L-valine, respectively. In Microcystis aeruginosa (strain NIES-843 / IAM M-2473), this protein is Dihydroxy-acid dehydratase.